Here is a 238-residue protein sequence, read N- to C-terminus: Ribonuclease PH (238 aa).

Positions Pro-67–Thr-87 are disordered. Residues Arg-86 and Gly-124–Arg-126 each bind phosphate.

This sequence belongs to the RNase PH family. As to quaternary structure, homohexameric ring arranged as a trimer of dimers.

The enzyme catalyses tRNA(n+1) + phosphate = tRNA(n) + a ribonucleoside 5'-diphosphate. Functionally, phosphorolytic 3'-5' exoribonuclease that plays an important role in tRNA 3'-end maturation. Removes nucleotide residues following the 3'-CCA terminus of tRNAs; can also add nucleotides to the ends of RNA molecules by using nucleoside diphosphates as substrates, but this may not be physiologically important. Probably plays a role in initiation of 16S rRNA degradation (leading to ribosome degradation) during starvation. This is Ribonuclease PH from Ralstonia nicotianae (strain ATCC BAA-1114 / GMI1000) (Ralstonia solanacearum).